The sequence spans 132 residues: Small ribosomal subunit protein uS8 (132 aa).

The protein belongs to the universal ribosomal protein uS8 family. In terms of assembly, part of the 30S ribosomal subunit. Contacts proteins S5 and S12.

One of the primary rRNA binding proteins, it binds directly to 16S rRNA central domain where it helps coordinate assembly of the platform of the 30S subunit. This is Small ribosomal subunit protein uS8 from Staphylococcus carnosus (strain TM300).